The sequence spans 100 residues: Aspartyl/glutamyl-tRNA(Asn/Gln) amidotransferase subunit C (100 aa).

This sequence belongs to the GatC family. As to quaternary structure, heterotrimer of A, B and C subunits.

The catalysed reaction is L-glutamyl-tRNA(Gln) + L-glutamine + ATP + H2O = L-glutaminyl-tRNA(Gln) + L-glutamate + ADP + phosphate + H(+). It carries out the reaction L-aspartyl-tRNA(Asn) + L-glutamine + ATP + H2O = L-asparaginyl-tRNA(Asn) + L-glutamate + ADP + phosphate + 2 H(+). In terms of biological role, allows the formation of correctly charged Asn-tRNA(Asn) or Gln-tRNA(Gln) through the transamidation of misacylated Asp-tRNA(Asn) or Glu-tRNA(Gln) in organisms which lack either or both of asparaginyl-tRNA or glutaminyl-tRNA synthetases. The reaction takes place in the presence of glutamine and ATP through an activated phospho-Asp-tRNA(Asn) or phospho-Glu-tRNA(Gln). This Streptococcus mutans serotype c (strain ATCC 700610 / UA159) protein is Aspartyl/glutamyl-tRNA(Asn/Gln) amidotransferase subunit C.